A 139-amino-acid polypeptide reads, in one-letter code: MHEWALADAIVRTVLDYAQREGASRVKAVRVVLGELQDVAEDIVKFAMEQLFAGTIAEGAEIEFVEEEAVFKCRNCNYEWKLKEVKDKFDERIKEDIHFIPEVVHAFLACPKCGSHDFEVVKGRGVYVAGIKIEKEGGS.

M1 and H2 together coordinate Ni(2+). Residues C73 and C76 each contribute to the Zn(2+) site. H98 contributes to the Ni(2+) binding site. The Zn(2+) site is built by C110 and C113.

Belongs to the HypA/HybF family. As to quaternary structure, monomer and homodimer. Could also form hexamers. Forms a complex with HypB.

Involved in the maturation of [NiFe] hydrogenases. Required for nickel insertion into the metal center of the hydrogenase. This Thermococcus kodakarensis (strain ATCC BAA-918 / JCM 12380 / KOD1) (Pyrococcus kodakaraensis (strain KOD1)) protein is Hydrogenase maturation factor HypA.